A 234-amino-acid chain; its full sequence is MAAAKQRKPHVSRNPELVRGIGKYSRSKMYHKRGLWAIKAKNGGVFPKHAPKSADSKAVEKPPKFYPADDVKKPLINKRKPKPTKLRASITPGTVLIILAGRFKGKRVVFLKQLSSGLLLVTGPFKVNGVPLRRVNQAYVIATSTKVDISGVNVEKFDDKYFGKKAEKKNKKGEGEFFEAEKKEVNVLPQEKKDDQKAVDVALLKAIEGVPELKAYLGARFSLKAGMKPHELVF.

Belongs to the eukaryotic ribosomal protein eL6 family.

This Mesembryanthemum crystallinum (Common ice plant) protein is Large ribosomal subunit protein eL6 (RPL6).